The following is a 118-amino-acid chain: Small ribosomal subunit protein mS37 (118 aa).

The 43-residue stretch at 42–84 (EATCITEMSVMMACWKQNEFRDDACRKEIQGFLDCAARAQEAR) folds into the CHCH domain. 2 consecutive short sequence motifs (cx9C motif) follow at residues 45–55 (CITEMSVMMAC) and 66–76 (CRKEIQGFLDC). Disulfide bonds link Cys-45-Cys-76 and Cys-55-Cys-66.

It belongs to the mitochondrion-specific ribosomal protein mS37 family. Component of the mitochondrial small ribosomal subunit (mt-SSU). Mature mammalian 55S mitochondrial ribosomes consist of a small (28S) and a large (39S) subunit. The 28S small subunit contains a 12S ribosomal RNA (12S mt-rRNA) and 30 different proteins. The 39S large subunit contains a 16S rRNA (16S mt-rRNA), a copy of mitochondrial valine transfer RNA (mt-tRNA(Val)), which plays an integral structural role, and 52 different proteins.

Its subcellular location is the mitochondrion. The protein resides in the nucleus. The polypeptide is Small ribosomal subunit protein mS37 (CHCHD1) (Homo sapiens (Human)).